Here is a 76-residue protein sequence, read N- to C-terminus: Sec-independent protein translocase protein TatA (76 aa).

Residues 1 to 21 (MGSFSIWHWLIVLAVVLLLFG) form a helical membrane-spanning segment. The interval 43 to 76 (MSDEDAKDDARDSGRTIDAKADETVNDVKKTTKS) is disordered. The span at 50 to 76 (DDARDSGRTIDAKADETVNDVKKTTKS) shows a compositional bias: basic and acidic residues.

It belongs to the TatA/E family. The Tat system comprises two distinct complexes: a TatABC complex, containing multiple copies of TatA, TatB and TatC subunits, and a separate TatA complex, containing only TatA subunits. Substrates initially bind to the TatABC complex, which probably triggers association of the separate TatA complex to form the active translocon.

It localises to the cell inner membrane. In terms of biological role, part of the twin-arginine translocation (Tat) system that transports large folded proteins containing a characteristic twin-arginine motif in their signal peptide across membranes. TatA could form the protein-conducting channel of the Tat system. This Brucella anthropi (strain ATCC 49188 / DSM 6882 / CCUG 24695 / JCM 21032 / LMG 3331 / NBRC 15819 / NCTC 12168 / Alc 37) (Ochrobactrum anthropi) protein is Sec-independent protein translocase protein TatA.